The chain runs to 387 residues: Anhydro-N-acetylmuramic acid kinase (387 aa).

17–24 lines the ATP pocket; sequence GTSMDGVD.

This sequence belongs to the anhydro-N-acetylmuramic acid kinase family.

The catalysed reaction is 1,6-anhydro-N-acetyl-beta-muramate + ATP + H2O = N-acetyl-D-muramate 6-phosphate + ADP + H(+). The protein operates within amino-sugar metabolism; 1,6-anhydro-N-acetylmuramate degradation. It functions in the pathway cell wall biogenesis; peptidoglycan recycling. Its function is as follows. Catalyzes the specific phosphorylation of 1,6-anhydro-N-acetylmuramic acid (anhMurNAc) with the simultaneous cleavage of the 1,6-anhydro ring, generating MurNAc-6-P. Is required for the utilization of anhMurNAc either imported from the medium or derived from its own cell wall murein, and thus plays a role in cell wall recycling. This Burkholderia pseudomallei (strain 1710b) protein is Anhydro-N-acetylmuramic acid kinase.